The following is a 64-amino-acid chain: MIEVPCPICQKSVPWINESTFRPFCSKRCQLIDLGEWAAEEKAIPSDTADFAMDPNVSDEWSIK.

The Zn(2+) site is built by Cys-6, Cys-9, Cys-25, and Cys-29.

This sequence belongs to the DNA gyrase inhibitor YacG family. As to quaternary structure, interacts with GyrB. It depends on Zn(2+) as a cofactor.

In terms of biological role, inhibits all the catalytic activities of DNA gyrase by preventing its interaction with DNA. Acts by binding directly to the C-terminal domain of GyrB, which probably disrupts DNA binding by the gyrase. This is DNA gyrase inhibitor YacG from Haemophilus influenzae (strain ATCC 51907 / DSM 11121 / KW20 / Rd).